Here is a 698-residue protein sequence, read N- to C-terminus: Cytoplasmic polyadenylation element-binding protein 3 (698 aa).

Over residues 1–11 the composition is skewed to basic and acidic residues; it reads MQDDLLMDKSK. Disordered stretches follow at residues 1 to 114 and 158 to 208; these read MQDD…WSTG and AQTQ…SAAA. Over residues 13–28 the composition is skewed to low complexity; the sequence is QPQPQQQQRQQQQPQP. Residues 29 to 44 are compositionally biased toward polar residues; the sequence is ESSVSEAPSTPLSSET. Residues 87-96 are compositionally biased toward pro residues; it reads PQQPPPPQEP. Over residues 103–114 the composition is skewed to polar residues; it reads LSPSFGSTWSTG. The segment covering 165-185 has biased composition (pro residues); sequence QPPPPAPAPQPAQPAQPPQAQ. Low complexity predominate over residues 186–208; that stretch reads PPQQRRSPASPSQAPYAQRSAAA. Residues serine 192, serine 195, and serine 290 each carry the phosphoserine modification. An Asymmetric dimethylarginine modification is found at arginine 308. 2 consecutive RRM domains span residues 441 to 532 and 549 to 631; these read RKVF…PWNL and KTIF…PYVL.

This sequence belongs to the RRM CPEB family. Following synaptic activity, forms amyloid-like oligomers. Aggregation requires an intact actin cytoskeleton. Interacts with STAT5B; this inhibits STAT5B-mediated transcriptional activation. Interacts with E3 ubiquitin-protein ligase NEURL1; this leads to monoubiquitination and activation of CPEB3. Interacts with CAPN2; this leads to cleavage of CPEB3. Interacts (via C-terminal RNA-binding region) with TOB1; TOB1 also binds CNOT7/CAF1 and recruits it to CPEB3 to form a ternary complex. Interacts with SUMO-conjugating enzyme UBC9. Interacts with IPO5; the interaction is enhanced in a RAN-regulated manner following neuronal stimulation and mediates CPEB3 nuclear import. Interacts with exportin XPO1/CRM1. Post-translationally, activated by NEURL1-mediated monoubiquitination, resulting in the growth of new dendritic spines and increased levels of GRIA1 and GRIA2. NEURL1-mediated monoubiquitination facilitates synaptic plasticity and hippocampal-dependent memory storage. In terms of processing, under basal unstimulated conditions when CPEB3 is mainly unaggregated, sumoylated and acts as a translational repressor. Following neuronal stimulation, becomes desumoylated and aggregated which is required for the translation of mRNA targets and for dendritic filopodia formation. Following neuronal stimulation, cleaved by CAPN2 which abolishes its translational repressor activity, leading to translation of CPEB3 target mRNAs. Post-translationally, phosphorylation is enhanced by neuronal stimulation.

The protein localises to the cytoplasm. The protein resides in the nucleus. Its subcellular location is the synapse. It localises to the cell projection. It is found in the dendrite. The protein localises to the postsynaptic density. Sequence-specific RNA-binding protein which acts as a translational repressor in the basal unstimulated state but, following neuronal stimulation, acts as a translational activator. In contrast to CPEB1, does not bind to the cytoplasmic polyadenylation element (CPE), a uridine-rich sequence element within the mRNA 3'-UTR, but binds to a U-rich loop within a stem-loop structure. Required for the consolidation and maintenance of hippocampal-based long term memory. In the basal state, binds to the mRNA 3'-UTR of the glutamate receptors GRIA2/GLUR2 mRNA and negatively regulates their translation. Also represses the translation of DLG4, GRIN1, GRIN2A and GRIN2B. When activated, acts as a translational activator of GRIA1 and GRIA2. In the basal state, suppresses SUMO2 translation but activates it following neuronal stimulation. Binds to the 3'-UTR of TRPV1 mRNA and represses TRPV1 translation which is required to maintain normal thermoception. Binds actin mRNA, leading to actin translational repression in the basal state and to translational activation following neuronal stimulation. Negatively regulates target mRNA levels by binding to TOB1 which recruits CNOT7/CAF1 to a ternary complex and this leads to target mRNA deadenylation and decay. In addition to its role in translation, binds to and inhibits the transcriptional activation activity of STAT5B without affecting its dimerization or DNA-binding activity. This, in turn, represses transcription of the STAT5B target gene EGFR which has been shown to play a role in enhancing learning and memory performance. In contrast to CPEB1, CPEB2 and CPEB4, not required for cell cycle progression. The protein is Cytoplasmic polyadenylation element-binding protein 3 (CPEB3) of Homo sapiens (Human).